Here is a 164-residue protein sequence, read N- to C-terminus: Diphosphoinositol polyphosphate phosphohydrolase 3-alpha (164 aa).

Residues arginine 9, 17-19 (KKR), and 38-40 (SSR) each bind substrate. One can recognise a Nudix hydrolase domain in the interval 17-144 (KKRAACLCFR…VHAEYLEKLK (128 aa)). Mg(2+) is bound by residues glycine 49 and glutamate 65. The short motif at 50-71 (GGMEPEEEPGGAAVREVYEEAG) is the Nudix box element. The active-site Proton acceptor is the glutamate 68. Glutamate 69 lines the Mg(2+) pocket. Substrate contacts are provided by residues 89–91 (PKH), arginine 115, and lysine 133. Residues 144 to 164 (KLGGSPTNGNSMAPSSPDSDP) form a disordered region. Positions 148 to 164 (SPTNGNSMAPSSPDSDP) are enriched in polar residues.

This sequence belongs to the Nudix hydrolase family. DIPP subfamily. Mg(2+) is required as a cofactor. Requires Mn(2+) as cofactor. Mainly expressed in testis and, at lower level in brain. According to PubMed:12121577, it is widely expressed.

The protein resides in the cytoplasm. It catalyses the reaction diphospho-myo-inositol polyphosphate + H2O = myo-inositol polyphosphate + phosphate.. The enzyme catalyses P(1),P(6)-bis(5'-adenosyl) hexaphosphate + H2O = adenosine 5'-pentaphosphate + AMP + 2 H(+). It carries out the reaction P(1),P(5)-bis(5'-adenosyl) pentaphosphate + H2O = adenosine 5'-tetraphosphate + AMP + 2 H(+). In terms of biological role, cleaves a beta-phosphate from the diphosphate groups in PP-InsP5 (diphosphoinositol pentakisphosphate), suggesting that it may play a role in signal transduction. Also able to catalyze the hydrolysis of dinucleoside oligophosphates, with Ap6A and Ap5A being the preferred substrates. The major reaction products are ADP and p4a from Ap6A and ADP and ATP from Ap5A. Also able to hydrolyze 5-phosphoribose 1-diphosphate. The protein is Diphosphoinositol polyphosphate phosphohydrolase 3-alpha (NUDT10) of Homo sapiens (Human).